A 452-amino-acid polypeptide reads, in one-letter code: 23S rRNA (uracil(1939)-C(5))-methyltransferase RlmD (452 aa).

Residues 1–23 (MSRKKSNGGLRFQPAGGNRATQI) form a disordered region. The region spanning 22–80 (QIPVGKKQRLLIERVAGDGRGIAFIEGRTWFVSGALGGEEVEARVLGARGKVVEARLER) is the TRAM domain. The [4Fe-4S] cluster site is built by Cys93, Cys99, Cys102, and Cys181. Residues Gln285, Phe314, Asn319, Glu335, Asp362, and Asp383 each contribute to the S-adenosyl-L-methionine site. The Nucleophile role is filled by Cys409.

This sequence belongs to the class I-like SAM-binding methyltransferase superfamily. RNA M5U methyltransferase family. RlmD subfamily.

It carries out the reaction uridine(1939) in 23S rRNA + S-adenosyl-L-methionine = 5-methyluridine(1939) in 23S rRNA + S-adenosyl-L-homocysteine + H(+). In terms of biological role, catalyzes the formation of 5-methyl-uridine at position 1939 (m5U1939) in 23S rRNA. The chain is 23S rRNA (uracil(1939)-C(5))-methyltransferase RlmD from Pseudomonas entomophila (strain L48).